A 228-amino-acid polypeptide reads, in one-letter code: Orotidine 5'-phosphate decarboxylase (228 aa).

Residues Asp-11, Lys-33, 60–69 (DLKLHDIPNT), Thr-117, Arg-178, Gln-186, Gly-206, and Arg-207 each bind substrate. The active-site Proton donor is Lys-62.

This sequence belongs to the OMP decarboxylase family. Type 1 subfamily. Homodimer.

The catalysed reaction is orotidine 5'-phosphate + H(+) = UMP + CO2. It functions in the pathway pyrimidine metabolism; UMP biosynthesis via de novo pathway; UMP from orotate: step 2/2. Its function is as follows. Catalyzes the decarboxylation of orotidine 5'-monophosphate (OMP) to uridine 5'-monophosphate (UMP). This Ehrlichia canis (strain Jake) protein is Orotidine 5'-phosphate decarboxylase.